We begin with the raw amino-acid sequence, 261 residues long: Neurovirulence factor ICP34.5 (261 aa).

Positions 1 to 17 are enriched in basic residues; sequence MSRRRGPRRRGPRRRPR. A required for nucleolar localization region spans residues 1–19; the sequence is MSRRRGPRRRGPRRRPRPG. 3 disordered regions span residues 1 to 59, 75 to 135, and 145 to 164; these read MSRR…SAPA, DSDD…LALR, and RLSL…APRG. Repeats lie at residues 3–7, 8–12, 16–23, and 24–31; these read RRRGP and PRPGAPAV. Residues 3–12 form a 2 X 5 AA tandem repeats of R-R-R-G-P region; the sequence is RRRGPRRRGP. Residues 16–31 form a 2 X 8 AA tandem repeats of P-R-P-G-A-P-A-V region; that stretch reads PRPGAPAVPRPGAPAV. Positions 18-32 are enriched in pro residues; it reads PGAPAVPRPGAPAVP. Acidic residues predominate over residues 75 to 88; it reads DSDDADYAGNDDAE. The segment covering 101–111 has biased composition (low complexity); sequence APEAPHAAPAA. Positions 128-137 match the Nuclear export signal motif; that stretch reads LPPHLALRLR. Positions 163–176 are binding to PP1CA; sequence RGKVCFSPRVQVRH. The interval 163–176 is interaction with host PPP1CA; that stretch reads RGKVCFSPRVQVRH. Residues 178-261 are important for interferon resistance; sequence VAWETAARLA…AAAGPGRRAV (84 aa). The Bipartite nuclear localization signal motif lies at 188-206; that stretch reads RRGSWARERADRDRFRRRV. Positions 206 to 221 are interaction with host EIF2S1/EIF-2ALPHA; that stretch reads VAAAEAVIGPCLEPEA. The segment at 223–261 is disordered; the sequence is ARARARARAHEDGGPAEEEEAAAAARGSSAAAGPGRRAV. A compositionally biased stretch (low complexity) spans 244–261; that stretch reads AAAARGSSAAAGPGRRAV.

This sequence belongs to the PPP1R15 family. Interacts with host PPP1CA to form a high-molecular-weight complex that dephosphorylates EIF2S1/eIF-2alpha. Interacts with host EIF2S1/eIF-2alpha; this interaction is crucial for the specific dephosphorylation of EIF2S1/eIF-2alpha by PPP1CA.

It localises to the host cytoplasm. Its subcellular location is the host nucleus. The protein resides in the host nucleolus. It is found in the virion. Plays essential roles in viral nuclear egress to mediate capsid transit across the nuclear membrane and also in the inhibition of host immune response and integrated stress response (ISR). Facilitates nuclear egress cooperatively with host C1QBP and protein kinase C/PKC to induce lamin A/C phosphorylation and subsequent reorganization. In turn, lamina disassembles and nuclear egress occurs. Recruits the serine/threonine-protein phosphatase PPP1CA/PP1-alpha to dephosphorylate the translation initiation factor EIF2S1/eIF-2alpha, thereby couteracting the host shutoff of protein synthesis involving double-stranded RNA-dependent protein kinase EIF2AK2/PKR. Also down-modulates the host MHC class II proteins cell surface expression. Acts as a neurovirulence factor that has a profound effect on the growth of the virus in central nervous system tissue, probably through its ability to maintain an environment favorable for viral replication. This is Neurovirulence factor ICP34.5 (RL1) from Human herpesvirus 2 (strain HG52) (HHV-2).